A 229-amino-acid chain; its full sequence is 2-phytyl-1,4-naphtoquinone methyltransferase (229 aa).

The protein belongs to the class I-like SAM-binding methyltransferase superfamily. MenG/UbiE family.

It carries out the reaction demethylphylloquinol + S-adenosyl-L-methionine = phylloquinol + S-adenosyl-L-homocysteine + H(+). It participates in cofactor biosynthesis; phylloquinone biosynthesis. Functionally, methyltransferase required for the conversion of 2-phytyl-1,4-beta-naphthoquinol to phylloquinol. The sequence is that of 2-phytyl-1,4-naphtoquinone methyltransferase from Trichormus variabilis (strain ATCC 29413 / PCC 7937) (Anabaena variabilis).